Consider the following 156-residue polypeptide: Arginine repressor (156 aa).

The protein belongs to the ArgR family.

Its subcellular location is the cytoplasm. It functions in the pathway amino-acid biosynthesis; L-arginine biosynthesis [regulation]. In terms of biological role, regulates arginine biosynthesis genes. In Pectobacterium atrosepticum (strain SCRI 1043 / ATCC BAA-672) (Erwinia carotovora subsp. atroseptica), this protein is Arginine repressor.